The chain runs to 206 residues: Putative precorrin-2 dehydrogenase (206 aa).

NAD(+) contacts are provided by residues serine 20–valine 21 and lysine 41–glutamate 46.

The protein belongs to the precorrin-2 dehydrogenase / sirohydrochlorin ferrochelatase family. As to quaternary structure, homodimer.

The enzyme catalyses precorrin-2 + NAD(+) = sirohydrochlorin + NADH + 2 H(+). Its pathway is porphyrin-containing compound metabolism; siroheme biosynthesis; sirohydrochlorin from precorrin-2: step 1/1. Involved in the archaeal biosynthesis of heme. Catalyzes the oxiation of precorrin-2 into sirohydroclorin. The polypeptide is Putative precorrin-2 dehydrogenase (Methanocaldococcus jannaschii (strain ATCC 43067 / DSM 2661 / JAL-1 / JCM 10045 / NBRC 100440) (Methanococcus jannaschii)).